A 199-amino-acid polypeptide reads, in one-letter code: 3-isopropylmalate dehydratase small subunit (199 aa).

This sequence belongs to the LeuD family. LeuD type 1 subfamily. Heterodimer of LeuC and LeuD.

It catalyses the reaction (2R,3S)-3-isopropylmalate = (2S)-2-isopropylmalate. It functions in the pathway amino-acid biosynthesis; L-leucine biosynthesis; L-leucine from 3-methyl-2-oxobutanoate: step 2/4. Catalyzes the isomerization between 2-isopropylmalate and 3-isopropylmalate, via the formation of 2-isopropylmaleate. This chain is 3-isopropylmalate dehydratase small subunit, found in Kocuria rhizophila (strain ATCC 9341 / DSM 348 / NBRC 103217 / DC2201).